Consider the following 428-residue polypeptide: tRNA(Ile)-lysidine synthase (428 aa).

ATP is bound at residue 25–30; it reads SGGIDS.

Belongs to the tRNA(Ile)-lysidine synthase family.

It localises to the cytoplasm. It carries out the reaction cytidine(34) in tRNA(Ile2) + L-lysine + ATP = lysidine(34) in tRNA(Ile2) + AMP + diphosphate + H(+). In terms of biological role, ligates lysine onto the cytidine present at position 34 of the AUA codon-specific tRNA(Ile) that contains the anticodon CAU, in an ATP-dependent manner. Cytidine is converted to lysidine, thus changing the amino acid specificity of the tRNA from methionine to isoleucine. In Haemophilus ducreyi (strain 35000HP / ATCC 700724), this protein is tRNA(Ile)-lysidine synthase.